The primary structure comprises 192 residues: Pyruvate synthase subunit PorC (192 aa).

Heterotetramer of one alpha, one beta, one delta and one gamma chain.

The enzyme catalyses 2 oxidized [2Fe-2S]-[ferredoxin] + pyruvate + CoA = 2 reduced [2Fe-2S]-[ferredoxin] + acetyl-CoA + CO2 + H(+). The sequence is that of Pyruvate synthase subunit PorC (porC) from Thermotoga maritima (strain ATCC 43589 / DSM 3109 / JCM 10099 / NBRC 100826 / MSB8).